A 236-amino-acid chain; its full sequence is Large ribosomal subunit protein uL3 (236 aa).

Belongs to the universal ribosomal protein uL3 family. In terms of assembly, part of the 50S ribosomal subunit. Forms a cluster with proteins L14 and L19.

Functionally, one of the primary rRNA binding proteins, it binds directly near the 3'-end of the 23S rRNA, where it nucleates assembly of the 50S subunit. This Anaeromyxobacter dehalogenans (strain 2CP-C) protein is Large ribosomal subunit protein uL3.